The primary structure comprises 393 residues: Squamosa promoter-binding-like protein 17 (393 aa).

Over residues 40–49 (AAAVESSSTS) the composition is skewed to low complexity. A disordered region spans residues 40–67 (AAAVESSSTSSGGGGKKGKGVAAAAAPP). The SBP-type zinc finger occupies 71 to 148 (PPRCQVEGCG…AGHNERRRKP (78 aa)). Zn(2+) contacts are provided by C74, C79, C96, H99, C115, C118, H122, and C134. The Bipartite nuclear localization signal motif lies at 131-147 (KKSCRRRLAGHNERRRK). Positions 137–148 (RLAGHNERRRKP) are enriched in basic residues. 3 disordered regions span residues 137 to 158 (RLAG…SRYG), 273 to 301 (WDTT…GNNP), and 317 to 393 (GWNS…NWSL). Polar residues-rich tracts occupy residues 273–293 (WDTT…STAS) and 380–393 (GAFS…NWSL).

In terms of tissue distribution, expressed in young panicles.

It is found in the nucleus. Trans-acting factor that binds specifically to the consensus nucleotide sequence 5'-TNCGTACAA-3'. May be involved in panicle development. In Oryza sativa subsp. japonica (Rice), this protein is Squamosa promoter-binding-like protein 17 (SPL17).